The following is a 943-amino-acid chain: Nuclear receptor coactivator 7 (943 aa).

N-acetylmethionine is present on Met1. A compositionally biased stretch (basic and acidic residues) spans 1–15 (MDTKEEKKEQKERKQ). Residues 1–32 (MDTKEEKKEQKERKQSYFARLKKKKQAKQNAE) are a coiled coil. A disordered region spans residues 1–83 (MDTKEEKKEQ…RKSNQLKEIR (83 aa)). At Ser92 the chain carries Phosphoserine. In terms of domain architecture, LysM spans 117–160 (MEYTAGSQDTLNSVALKFNVTPNKLVELNKLFTHTIVPGQVLFV). Thr137 carries the phosphothreonine modification. A disordered region spans residues 169–189 (TIQLSSSTPGATVSPSSSDAE). The span at 177–187 (PGATVSPSSSD) shows a compositional bias: polar residues. 5 positions are modified to phosphoserine: Ser182, Ser186, Ser211, Ser212, and Ser214. The interval 334–369 (EKRQQNGERTLALDAKSVRSPEESTERTCTRIEPPD) is disordered. Over residues 349–369 (KSVRSPEESTERTCTRIEPPD) the composition is skewed to basic and acidic residues. Phosphoserine occurs at positions 442, 498, and 500. Residues 486–499 (EKQDEAPEVDKHSG) are compositionally biased toward basic and acidic residues. 2 disordered regions span residues 486–507 (EKQD…LGES) and 543–576 (LSDR…NKEP). In terms of domain architecture, TLDc spans 782-943 (ALLENMHIEQ…VQDLEVWTFE (162 aa)).

This sequence belongs to the OXR1 family. In terms of assembly, interacts with ESR1, ESR2A, ESR2B, THRB, PPARG and RARA in a ligand-inducible manner. Interacts with the heterodimer AHR-ARNT. In terms of tissue distribution, highly expressed in brain and kidney. Weakly expressed in mammary gland, lung and testis. In brain, expression is found in neurons of cerebral cortex, thalamus, hypothalamus, hippocampus, cerebellum, striatum and choroid plexus.

It is found in the nucleus. Enhances the transcriptional activities of several nuclear receptors. Involved in the coactivation of different nuclear receptors, such as ESR1, THRB, PPARG and RARA. The protein is Nuclear receptor coactivator 7 (Ncoa7) of Mus musculus (Mouse).